A 588-amino-acid polypeptide reads, in one-letter code: Probable cytochrome c oxidase subunit 1-beta (588 aa).

A disordered region spans residues 1-26 (MTATPAQRRPALPATRPYPARHGPKG). A helical transmembrane segment spans residues 43–63 (VLYLVSATGFFLIGGLLALLM). His-87 is a Fe(II)-heme a binding site. 6 consecutive transmembrane segments (helical) span residues 90-110 (IMLL…VLPL), 128-148 (WLYL…GGAA), 171-191 (LWIL…VNMI), 214-234 (ILIT…ALMA), 259-279 (LFWF…FGII), and 291-311 (IFGY…SMAV). 2 residues coordinate Cu cation: His-265 and Tyr-269. Residues 265–269 (HPEVY) constitute a cross-link (1'-histidyl-3'-tyrosine (His-Tyr)). Cu cation contacts are provided by His-314 and His-315. Transmembrane regions (helical) follow at residues 320-340 (GAVL…PTGV) and 360-380 (MLFA…GVIL). Residue His-398 participates in heme a3 binding. 3 helical membrane-spanning segments follow: residues 399 to 419 (FHYV…YFWF), 434 to 454 (LHFW…HWLG), and 477 to 497 (VSTI…WNGF). Residue His-400 coordinates Fe(II)-heme a. The disordered stretch occupies residues 557–588 (AEAHAGRRAGHGAGAELSVPSTVATKDDDHTS).

The protein belongs to the heme-copper respiratory oxidase family. In terms of assembly, associates with subunits II, III and IV to form cytochrome c oxidase. The cofactor is Cu(2+). Heme is required as a cofactor.

The protein resides in the cell membrane. The enzyme catalyses 4 Fe(II)-[cytochrome c] + O2 + 8 H(+)(in) = 4 Fe(III)-[cytochrome c] + 2 H2O + 4 H(+)(out). Its pathway is energy metabolism; oxidative phosphorylation. Functionally, cytochrome c oxidase is the component of the respiratory chain that catalyzes the reduction of oxygen to water. Subunits 1-3 form the functional core of the enzyme complex. CO I is the catalytic subunit of the enzyme. Electrons originating in cytochrome c are transferred via the copper A center of subunit 2 and heme A of subunit 1 to the bimetallic center formed by heme A3 and copper B. The polypeptide is Probable cytochrome c oxidase subunit 1-beta (ctaD2) (Nocardia farcinica (strain IFM 10152)).